Here is a 585-residue protein sequence, read N- to C-terminus: Mitochondrial translation ATP-dependent RNA helicase mrh5 (585 aa).

The Q motif motif lies at 87–117 (PKFHELPLNQNILDGLSTNFAEYKNSTPLQQ). The 231-residue stretch at 121 to 351 (NALMKSGVSF…SRYITDQLGI (231 aa)) folds into the Helicase ATP-binding domain. 134 to 141 (GWNGSGKS) contributes to the ATP binding site. Residues 261 to 264 (DESD) carry the DEAD box motif. Residues 390–584 (NLPYEFVRFN…PKSYEFDDEH (195 aa)) form the Helicase C-terminal domain.

It belongs to the DEAD box helicase family. Component of the MRH5C complex, composed of mrh5, ppr4, mtf2, and sls1. Proteins mtf2 and sls1 form a subcomplex that serves as a scaffold to bring mrh5 and ppr4 together. The MRH5C complex associates with the small subunit of the mitochondrial ribosome.

The protein localises to the mitochondrion. The catalysed reaction is ATP + H2O = ADP + phosphate + H(+). In terms of biological role, translation activation factor that as part of the MRH5C complex specifically recruits cox1 mRNA to the mitochondrial ribosome for translation initiation. This chain is Mitochondrial translation ATP-dependent RNA helicase mrh5, found in Schizosaccharomyces pombe (strain 972 / ATCC 24843) (Fission yeast).